The following is a 31-amino-acid chain: Cyclotide hyen-I (31 aa).

A cross-link (cyclopeptide (Gly-Asp)) is located at residues glycine 1–aspartate 31. 3 disulfide bridges follow: cysteine 5-cysteine 21, cysteine 9-cysteine 23, and cysteine 14-cysteine 28.

Post-translationally, this is a cyclic peptide. As to expression, detected in seeds (at protein level).

Probably participates in a plant defense mechanism. This Pigea enneasperma (Spade flower) protein is Cyclotide hyen-I.